The following is a 247-amino-acid chain: tRNA (guanine-N(7)-)-methyltransferase (247 aa).

S-adenosyl-L-methionine-binding positions include Gly-70, 93–94 (EI), 128–129 (NA), and Leu-148. Asp-151 is a catalytic residue. Position 226-228 (226-228 (SEE)) interacts with S-adenosyl-L-methionine.

The protein belongs to the class I-like SAM-binding methyltransferase superfamily. TrmB family.

The protein resides in the nucleus. The enzyme catalyses guanosine(46) in tRNA + S-adenosyl-L-methionine = N(7)-methylguanosine(46) in tRNA + S-adenosyl-L-homocysteine. It participates in tRNA modification; N(7)-methylguanine-tRNA biosynthesis. Its function is as follows. Catalyzes the formation of N(7)-methylguanine at position 46 (m7G46) in tRNA. The chain is tRNA (guanine-N(7)-)-methyltransferase from Drosophila persimilis (Fruit fly).